The sequence spans 919 residues: Glutamate receptor ionotropic, kainate 3 (919 aa).

The signal sequence occupies residues 1-31 (MTAPWRRLRSLVWEYWAGFLVCAFWIPDSRG). Over 32-563 (MPHVIRIGGI…VFSFLNPLSP (532 aa)) the chain is Extracellular. 7 N-linked (GlcNAc...) asparagine glycosylation sites follow: Asn-70, Asn-76, Asn-278, Asn-381, Asn-415, Asn-426, and Asn-433. Cys-99 and Cys-350 are joined by a disulfide. L-glutamate-binding residues include Pro-518, Thr-520, and Arg-525. N-linked (GlcNAc...) asparagine glycosylation is found at Asn-548 and Asn-551. The helical transmembrane segment at 564-584 (DIWMYVLLAYLGVSCVLFVIA) threads the bilayer. Residues 585–636 (RFSPYEWYDAHPCNPGSEVVENNFTLLNSFWFGMGSLMQQGSELMPKALSTR) lie on the Cytoplasmic side of the membrane. Residues 637–657 (IIGGIWWFFTLIIISSYTANL) form a helical membrane-spanning segment. Topologically, residues 658–820 (AAFLTVERME…KEASALGIQK (163 aa)) are extracellular. Ala-691, Thr-692, and Glu-739 together coordinate L-glutamate. N-linked (GlcNAc...) asparagine glycosylation occurs at Asn-752. The chain crosses the membrane as a helical span at residues 821 to 841 (IGGIFIVLAAGLVLSVLVAVG). The Cytoplasmic segment spans residues 842–919 (EFIYKLRKTA…CSTSLAPVFP (78 aa)). A Phosphoserine modification is found at Ser-869. Lys-887 is covalently cross-linked (Glycyl lysine isopeptide (Lys-Gly) (interchain with G-Cter in SUMO1)).

It belongs to the glutamate-gated ion channel (TC 1.A.10.1) family. GRIK3 subfamily. As to quaternary structure, homotetramer, and heterotetramer with either GRIK4 or GRIK5. Can form functional heteromeric receptors with GRIK2. Interacts with PRKCABP. Interacts with NETO2. Detected in whole brain, cerebellum, brain cortex and hippocampus.

The protein localises to the cell membrane. Its subcellular location is the postsynaptic cell membrane. The catalysed reaction is Ca(2+)(in) = Ca(2+)(out). Its activity is regulated as follows. Glutamate-gated receptor activity inhibited by spermine. Functionally, ionotropic glutamate receptor that functions as a cation-permeable ligand-gated ion channel, gated by L-glutamate and the glutamatergic agonist kainic acid. Binding of the excitatory neurotransmitter L-glutamate induces a conformation change, leading to the opening of the cation channel, and thereby converts the chemical signal to an electrical impulse. The receptor then desensitizes rapidly and enters a transient inactive state, characterized by the presence of bound agonist. In association with GRIK2, involved in presynaptic facilitation of glutamate release at hippocampal mossy fiber synapses. The chain is Glutamate receptor ionotropic, kainate 3 (Grik3) from Mus musculus (Mouse).